The following is a 323-amino-acid chain: Cytochrome c biogenesis protein CcsA (323 aa).

8 helical membrane passes run 18-38 (VSVVITLHLITLLVNEIVGLY), 43-63 (KGMLVTFFCITGLLVTRWVYW), 71-91 (LYESLIFLSWSFYLIHMIPSF), 99-119 (LNVITAPSAIFTQGFATSGLL), 146-166 (LGYAALLGGSLLSVTLLIIIF), 227-247 (VISLGFIFLTIGILSGAVWAN), 256-276 (WDPKETWAFITWTIFAIYLHI), and 288-308 (AIVAFIGFLIIWICYFGVNLL).

This sequence belongs to the CcmF/CycK/Ccl1/NrfE/CcsA family. As to quaternary structure, may interact with Ccs1.

It is found in the plastid. It localises to the chloroplast thylakoid membrane. In terms of biological role, required during biogenesis of c-type cytochromes (cytochrome c6 and cytochrome f) at the step of heme attachment. This is Cytochrome c biogenesis protein CcsA from Spinacia oleracea (Spinach).